A 168-amino-acid chain; its full sequence is Photosystem I assembly protein Ycf3 (168 aa).

3 TPR repeats span residues 35–68 (AFTY…EIDP), 72–105 (SYIL…NSFL), and 120–153 (GEQA…TPGN).

It belongs to the Ycf3 family.

It is found in the plastid. The protein resides in the chloroplast thylakoid membrane. Its function is as follows. Essential for the assembly of the photosystem I (PSI) complex. May act as a chaperone-like factor to guide the assembly of the PSI subunits. This is Photosystem I assembly protein Ycf3 from Jasminum nudiflorum (Winter jasmine).